The following is a 138-amino-acid chain: Spermidine export protein MdtJ (138 aa).

The next 4 helical transmembrane spans lie at 1–21, 30–50, 54–74, and 81–101; these read MIYW…TLSM, VVGM…LAMA, VALG…ITVF, and ESLS…IMLI.

It belongs to the drug/metabolite transporter (DMT) superfamily. Small multidrug resistance (SMR) (TC 2.A.7.1) family. MdtJ subfamily. In terms of assembly, forms a complex with MdtI.

Its subcellular location is the cell inner membrane. Its function is as follows. Catalyzes the excretion of spermidine. This chain is Spermidine export protein MdtJ, found in Photorhabdus laumondii subsp. laumondii (strain DSM 15139 / CIP 105565 / TT01) (Photorhabdus luminescens subsp. laumondii).